Consider the following 301-residue polypeptide: tRNA dimethylallyltransferase (301 aa).

Residue 12 to 19 (GPTASGKT) coordinates ATP. 14–19 (TASGKT) contacts substrate. The interaction with substrate tRNA stretch occupies residues 37 to 40 (DSLS).

This sequence belongs to the IPP transferase family. In terms of assembly, monomer. It depends on Mg(2+) as a cofactor.

The catalysed reaction is adenosine(37) in tRNA + dimethylallyl diphosphate = N(6)-dimethylallyladenosine(37) in tRNA + diphosphate. Catalyzes the transfer of a dimethylallyl group onto the adenine at position 37 in tRNAs that read codons beginning with uridine, leading to the formation of N6-(dimethylallyl)adenosine (i(6)A). In Sulfurovum sp. (strain NBC37-1), this protein is tRNA dimethylallyltransferase.